Here is a 115-residue protein sequence, read N- to C-terminus: Protein V2 (115 aa).

It belongs to the geminiviridae protein AV2/V2 family. In terms of assembly, interacts with host SGS3.

The protein resides in the host cytoplasm. It localises to the host perinuclear region. Functionally, through its interaction with host SGS3, acts as a suppressor of RNA-mediated gene silencing, also known as post-transcriptional gene silencing (PTGS), a mechanism of plant viral defense that limits the accumulation of viral RNAs. The polypeptide is Protein V2 (Tomato yellow leaf curl Sardinia virus (TYLCSV)).